The primary structure comprises 584 residues: Arginine--tRNA ligase (584 aa).

The 'HIGH' region signature appears at 127 to 137 (PNTNKPLHVGH).

This sequence belongs to the class-I aminoacyl-tRNA synthetase family. In terms of assembly, monomer.

The protein localises to the cytoplasm. The enzyme catalyses tRNA(Arg) + L-arginine + ATP = L-arginyl-tRNA(Arg) + AMP + diphosphate. The protein is Arginine--tRNA ligase of Borrelia turicatae (strain 91E135).